We begin with the raw amino-acid sequence, 182 residues long: Ribosome-recycling factor (182 aa).

This sequence belongs to the RRF family.

The protein localises to the cytoplasm. Responsible for the release of ribosomes from messenger RNA at the termination of protein biosynthesis. May increase the efficiency of translation by recycling ribosomes from one round of translation to another. The chain is Ribosome-recycling factor from Prochlorococcus marinus (strain MIT 9515).